A 1163-amino-acid polypeptide reads, in one-letter code: Reticulon-4 (1163 aa).

At Met-1 the chain carries N-acetylmethionine. Disordered stretches follow at residues 1–184 and 244–270; these read MEDI…AASE and SAVS…RATN. The Cytoplasmic segment spans residues 1–989; it reads MEDIDQSSLV…LYWRDIKKTG (989 aa). Phosphoserine occurs at positions 7 and 16. The segment covering 7-16 has biased composition (low complexity); it reads SSLVSSSTDS. Positions 31–55 are enriched in acidic residues; it reads EPEDEEDEEEEEDEEEDDEDLEELE. Over residues 62-79 the composition is skewed to low complexity; sequence AAGLSAAAVPPAAAAPLL. Over residues 87-101 the composition is skewed to pro residues; sequence PPAPRGPLPAAPPAA. Position 107 is a phosphoserine (Ser-107). Over residues 138 to 147 the composition is skewed to pro residues; it reads ARPPPPPPAG. Ser-149, Ser-169, and Ser-171 each carry phosphoserine. Phosphoserine occurs at positions 329, 333, and 343. Thr-347 is subject to Phosphothreonine. Residues 406–423 show a composition bias toward basic and acidic residues; that stretch reads DSLEQKSLGKDSEGRNED. 2 disordered regions span residues 406 to 437 and 454 to 474; these read DSLE…KDSS and TANT…DEKK. Position 425 is a phosphoserine (Ser-425). Thr-429 bears the Phosphothreonine mark. Over residues 461–474 the composition is skewed to basic and acidic residues; the sequence is LEDHTSENKTDEKK. A phosphoserine mark is found at Ser-488, Ser-689, Ser-726, Ser-766, and Ser-830. Residue Thr-832 is modified to Phosphothreonine. Ser-855, Ser-922, and Ser-962 each carry phosphoserine. The 188-residue stretch at 976 to 1163 folds into the Reticulon domain; that stretch reads VVDLLYWRDI…KIPGLKRKAD (188 aa). The helical transmembrane segment at 990 to 1010 threads the bilayer; sequence VVFGASLFLLLSLTVFSIVSV. Residues 1011-1104 are Lumenal-facing; sequence TAYIALALLS…LMWVFTYVGA (94 aa). Lys-1075 bears the N6-acetyllysine mark. The chain crosses the membrane as a helical span at residues 1105-1125; it reads LFNGLTLLILALISLFSIPVI. The Cytoplasmic portion of the chain corresponds to 1126 to 1163; the sequence is YERHQVQIDHYLGLANKSVKDAMAKIQAKIPGLKRKAD.

As to quaternary structure, binds to RTN4R. Interacts with ATL1. Interacts with TMEM170A. Interacts with RTN4IP1. Interacts in trans with CNTNAP1. Interacts with REEP5. Interacts with synaptic plasticity regulator PANTS; the interaction results in enhanced RTN4-mediated inhibition of AMPA receptor clustering. Interacts with GPR50. In terms of assembly, homodimer. Interacts with BAD/Bcl-xl and BCL2. Interact with RTN3. Interacts with NGBR. Interacts with SPTLC1. Interacts with GRAMD4. Interacts with CDH5. Interacts with BACE1 and BACE2. Interacts with REEP5. Interacts with RETREG3. As to quaternary structure, interacts with BACE1 and BACE2. Interacts with TMEM33. Isoforms A, B and C are present in optic nerve, spinal cord and cerebral cortex. Isoforms A and B are present in dorsal root ganglion, sciatic nerve and PC12 cells after longer exposure. Isoforms B and C are detected in kidney, cartilage, skin, lung and spleen. Isoform C is expressed at high level in skeletal muscle. In adult animals isoform A is expressed mainly in the nervous system.

It localises to the endoplasmic reticulum membrane. Its subcellular location is the cell membrane. It is found in the synapse. The protein localises to the cell junction. Functionally, required to induce the formation and stabilization of endoplasmic reticulum (ER) tubules. They regulate membrane morphogenesis in the ER by promoting tubular ER production. They influence nuclear envelope expansion, nuclear pore complex formation and proper localization of inner nuclear membrane proteins. However each isoform have specific functions mainly depending on their tissue expression specificities. Developmental neurite growth regulatory factor with a role as a negative regulator of axon-axon adhesion and growth, and as a facilitator of neurite branching. Regulates neurite fasciculation, branching and extension in the developing nervous system. Involved in down-regulation of growth, stabilization of wiring and restriction of plasticity in the adult CNS. Regulates the radial migration of cortical neurons via an RTN4R-LINGO1 containing receptor complex. Acts as a negative regulator of central nervous system angiogenesis. Inhibits spreading, migration and sprouting of primary brain microvascular endothelial cells (MVECs). Also induces the retraction of MVECs lamellipodia and filopodia in a ROCK pathway-dependent manner. In terms of biological role, mainly function in endothelial cells and vascular smooth muscle cells, is also involved in immune system regulation. Modulator of vascular remodeling, promotes the migration of endothelial cells but inhibits the migration of vascular smooth muscle cells. Regulates endothelial sphingolipid biosynthesis with direct effects on vascular function and blood pressure. Inhibits serine palmitoyltransferase, SPTLC1, the rate-limiting enzyme of the novo sphingolipid biosynthetic pathway, thereby controlling production of endothelial sphingosine-1-phosphate (S1P). Required to promote macrophage homing and functions such as cytokine/chemokine gene expression involved in angiogenesis, arteriogenesis and tissue repair. Mediates ICAM1 induced transendothelial migration of leukocytes such as monocytes and neutrophils and acute inflammation. Necessary for immune responses triggered by nucleic acid sensing TLRs, such as TLR9, is required for proper TLR9 location to endolysosomes. Also involved in immune response to LPS. Plays a role in liver regeneration through the modulation of hepatocytes proliferation. Reduces the anti-apoptotic activity of Bcl-xl and Bcl-2. This is likely consecutive to their change in subcellular location, from the mitochondria to the endoplasmic reticulum, after binding and sequestration. With isoform C, inhibits BACE1 activity and amyloid precursor protein processing. Its function is as follows. Regulates cardiomyocyte apoptosis upon hypoxic conditions. With isoform B, inhibits BACE1 activity and amyloid precursor protein processing. The sequence is that of Reticulon-4 (Rtn4) from Rattus norvegicus (Rat).